The primary structure comprises 356 residues: Protein RecA (356 aa).

68–75 (GPESSGKT) contributes to the ATP binding site.

It belongs to the RecA family.

It is found in the cytoplasm. Functionally, can catalyze the hydrolysis of ATP in the presence of single-stranded DNA, the ATP-dependent uptake of single-stranded DNA by duplex DNA, and the ATP-dependent hybridization of homologous single-stranded DNAs. It interacts with LexA causing its activation and leading to its autocatalytic cleavage. The chain is Protein RecA from Clostridium botulinum (strain Eklund 17B / Type B).